Here is a 321-residue protein sequence, read N- to C-terminus: Probable nucleosome assembly protein (321 aa).

Acidic residues predominate over residues 272–298 (EENDYDFGEDFEDEEGEDDDEEDDEEE). Residues 272–321 (EENDYDFGEDFEDEEGEDDDEEDDEEEQTIKKPSGKGKAQPQQPQDCKQQ) are disordered. A compositionally biased stretch (low complexity) spans 311-321 (QPQQPQDCKQQ).

This sequence belongs to the nucleosome assembly protein (NAP) family.

The protein resides in the nucleus. In terms of biological role, may modulate chromatin structure by regulation of histone octamer formation. This Dictyostelium discoideum (Social amoeba) protein is Probable nucleosome assembly protein (nap1).